The primary structure comprises 84 residues: MERSNRKTRIGRVVSNKMDKTIVVAVETKVRHPLYGKIMNRTTKFKAHDENNAANINDKVLIMETRPLSKQKRWRLVEVVEKAK.

It belongs to the universal ribosomal protein uS17 family. As to quaternary structure, part of the 30S ribosomal subunit.

In terms of biological role, one of the primary rRNA binding proteins, it binds specifically to the 5'-end of 16S ribosomal RNA. The protein is Small ribosomal subunit protein uS17 of Clostridium botulinum (strain ATCC 19397 / Type A).